A 465-amino-acid chain; its full sequence is Cysteine--tRNA ligase (465 aa).

Cys-29 serves as a coordination point for Zn(2+). Positions 31-41 match the 'HIGH' region motif; it reads PTVYNYIHIGN. Zn(2+) contacts are provided by Cys-209, His-234, and Glu-238. Residues 266–270 carry the 'KMSKS' region motif; the sequence is KMSKS. Lys-269 contacts ATP. Ser-270 bears the Phosphoserine mark.

The protein belongs to the class-I aminoacyl-tRNA synthetase family. In terms of assembly, monomer. It depends on Zn(2+) as a cofactor.

It localises to the cytoplasm. It carries out the reaction tRNA(Cys) + L-cysteine + ATP = L-cysteinyl-tRNA(Cys) + AMP + diphosphate. This is Cysteine--tRNA ligase from Bacillus anthracis (strain A0248).